The following is a 428-amino-acid chain: Histidinol dehydrogenase (428 aa).

3 residues coordinate NAD(+): Tyr-124, Gln-186, and Asn-209. Positions 233, 255, and 258 each coordinate substrate. Residues Gln-255 and His-258 each contribute to the Zn(2+) site. Residues Glu-322 and His-323 each act as proton acceptor in the active site. Positions 323, 356, 410, and 415 each coordinate substrate. Residue Asp-356 coordinates Zn(2+). His-415 contacts Zn(2+).

Belongs to the histidinol dehydrogenase family. The cofactor is Zn(2+).

The enzyme catalyses L-histidinol + 2 NAD(+) + H2O = L-histidine + 2 NADH + 3 H(+). It functions in the pathway amino-acid biosynthesis; L-histidine biosynthesis; L-histidine from 5-phospho-alpha-D-ribose 1-diphosphate: step 9/9. In terms of biological role, catalyzes the sequential NAD-dependent oxidations of L-histidinol to L-histidinaldehyde and then to L-histidine. In Bacteroides fragilis (strain ATCC 25285 / DSM 2151 / CCUG 4856 / JCM 11019 / LMG 10263 / NCTC 9343 / Onslow / VPI 2553 / EN-2), this protein is Histidinol dehydrogenase.